Consider the following 542-residue polypeptide: CTP synthase (542 aa).

Residues methionine 1–isoleucine 265 form an amidoligase domain region. Residue serine 13 coordinates CTP. Residue serine 13 participates in UTP binding. Serine 14–isoleucine 19 provides a ligand contact to ATP. Residue tyrosine 54 participates in L-glutamine binding. Residue aspartate 71 participates in ATP binding. Aspartate 71 and glutamate 139 together coordinate Mg(2+). CTP is bound by residues aspartate 146–glutamate 148, lysine 186–glutamine 191, and lysine 222. UTP-binding positions include lysine 186–glutamine 191 and lysine 222. Residues threonine 291–leucine 541 enclose the Glutamine amidotransferase type-1 domain. Residue glycine 353 coordinates L-glutamine. Residue cysteine 380 is the Nucleophile; for glutamine hydrolysis of the active site. L-glutamine-binding positions include phenylalanine 381 to glutamine 384, glutamate 404, and arginine 469. Active-site residues include histidine 514 and glutamate 516.

It belongs to the CTP synthase family. Homotetramer.

The catalysed reaction is UTP + L-glutamine + ATP + H2O = CTP + L-glutamate + ADP + phosphate + 2 H(+). It carries out the reaction L-glutamine + H2O = L-glutamate + NH4(+). The enzyme catalyses UTP + NH4(+) + ATP = CTP + ADP + phosphate + 2 H(+). It participates in pyrimidine metabolism; CTP biosynthesis via de novo pathway; CTP from UDP: step 2/2. Allosterically activated by GTP, when glutamine is the substrate; GTP has no effect on the reaction when ammonia is the substrate. The allosteric effector GTP functions by stabilizing the protein conformation that binds the tetrahedral intermediate(s) formed during glutamine hydrolysis. Inhibited by the product CTP, via allosteric rather than competitive inhibition. In terms of biological role, catalyzes the ATP-dependent amination of UTP to CTP with either L-glutamine or ammonia as the source of nitrogen. Regulates intracellular CTP levels through interactions with the four ribonucleotide triphosphates. This chain is CTP synthase, found in Brucella anthropi (strain ATCC 49188 / DSM 6882 / CCUG 24695 / JCM 21032 / LMG 3331 / NBRC 15819 / NCTC 12168 / Alc 37) (Ochrobactrum anthropi).